Here is a 544-residue protein sequence, read N- to C-terminus: Glutamyl-tRNA(Gln) amidotransferase subunit B, chloroplastic/mitochondrial (544 aa).

Belongs to the GatB/GatE family. GatB subfamily. In terms of assembly, subunit of the heterotrimeric GatCAB amidotransferase (AdT) complex, composed of A, B and C subunits.

The protein resides in the mitochondrion. It localises to the plastid. The protein localises to the chloroplast. It catalyses the reaction L-glutamyl-tRNA(Gln) + L-glutamine + ATP + H2O = L-glutaminyl-tRNA(Gln) + L-glutamate + ADP + phosphate + H(+). Its function is as follows. Allows the formation of correctly charged Gln-tRNA(Gln) through the transamidation of misacylated Glu-tRNA(Gln) in chloroplasts and mitochondria. The reaction takes place in the presence of glutamine and ATP through an activated gamma-phospho-Glu-tRNA(Gln). This is Glutamyl-tRNA(Gln) amidotransferase subunit B, chloroplastic/mitochondrial from Oryza sativa subsp. japonica (Rice).